A 323-amino-acid chain; its full sequence is Breast cancer metastasis-suppressor 1-like protein (323 aa).

Over residues 1-15 (MPVHSREKKENNHDE) the composition is skewed to basic and acidic residues. A disordered region spans residues 1-56 (MPVHSREKKENNHDEMEVDYGENEGSTSEEEETESSSVSEEGDSSEMDDEDCERRR). A compositionally biased stretch (acidic residues) spans 16–51 (MEVDYGENEGSTSEEEETESSSVSEEGDSSEMDDED). Coiled-coil stretches lie at residues 50–82 (EDCE…KERL) and 147–178 (EKLL…ITSE).

This sequence belongs to the BRMS1 family.

The protein resides in the nucleus. In terms of biological role, involved in the histone deacetylase (HDAC1)-dependent transcriptional repression activity. This Gallus gallus (Chicken) protein is Breast cancer metastasis-suppressor 1-like protein (BRMS1L).